The following is a 490-amino-acid chain: Protein nucleotidyltransferase YdiU (490 aa).

The ATP site is built by glycine 92, glycine 94, arginine 95, lysine 114, aspartate 126, glycine 127, arginine 177, and arginine 184. Aspartate 256 serves as the catalytic Proton acceptor. Residues asparagine 257 and aspartate 266 each contribute to the Mg(2+) site. Aspartate 266 contacts ATP.

The protein belongs to the SELO family. Requires Mg(2+) as cofactor. The cofactor is Mn(2+).

The enzyme catalyses L-seryl-[protein] + ATP = 3-O-(5'-adenylyl)-L-seryl-[protein] + diphosphate. It catalyses the reaction L-threonyl-[protein] + ATP = 3-O-(5'-adenylyl)-L-threonyl-[protein] + diphosphate. It carries out the reaction L-tyrosyl-[protein] + ATP = O-(5'-adenylyl)-L-tyrosyl-[protein] + diphosphate. The catalysed reaction is L-histidyl-[protein] + UTP = N(tele)-(5'-uridylyl)-L-histidyl-[protein] + diphosphate. The enzyme catalyses L-seryl-[protein] + UTP = O-(5'-uridylyl)-L-seryl-[protein] + diphosphate. It catalyses the reaction L-tyrosyl-[protein] + UTP = O-(5'-uridylyl)-L-tyrosyl-[protein] + diphosphate. Its function is as follows. Nucleotidyltransferase involved in the post-translational modification of proteins. It can catalyze the addition of adenosine monophosphate (AMP) or uridine monophosphate (UMP) to a protein, resulting in modifications known as AMPylation and UMPylation. The chain is Protein nucleotidyltransferase YdiU from Bordetella avium (strain 197N).